The sequence spans 911 residues: MATSVDNRHYPRLNPAINGVVRSFKPPPIPSPRHQNKTVSFLTEKVIVKETKNDAVDDSYDSSDDEDESHNRNVSYYKEMIRKSHSDVEPSILDSRDESTADNWIHRNSSMVRLTGKHPFNAEPPLPRLMHHGFITPVPLHYVRNHGTVPKADWSEWTVEITGLVKRPAKFTMEELISEFPSREFPVTLVCAGNRRKEQNMVKQTIGFNWGSAGVSTSLWKGVPLSEILGRCGIYSRRGGGLNVCFEGAEDLPGGGGSKYGTSIKKEMAMDPARDIILAYMQNGELLTPDHGFPVRIIVPGFIGGRMVKWLKRIIVTPQESDSYYHYKDNRVLPSLVDAELANAEAWWYKPEYIINELNINSVITTPGHQEILPINAFTTQKPYTLKGYAYSGGGKKVTRVEVTLDGGDTWSVCDLDHQEKPNKYGKFWCWCFWSLDVEVLDLLSAKDVAVRAWDESFNTQPDKLIWNLMGMMNNCWFRIKTNVCKPHKGEIGIVFEHPTRPGNQSGGWMAKERQLEISSESNPILKKSVSSPFMNTSAKMYSMSEVRKHNSVESAWIIVHGHIYDCTRFLKDHPGGSDSILINAGTDCTEEFEAIHSDKAKKLLEDYRIGELITTGYDSSPNVSVHGGSTAVSLLAPIKELAPSKNIALVNPREKVPVTLIEKTSISHDVRRFRFALPSEDQQLGLPVGKHIFLCANINDKLCLRAYTPTSTVDAVGHIDLVVKVYFKDVHPRFPNGGLMSQHLDSLPIGSVLNIKGPLGHIEYLGKGNFMVTGKPKFAKKLAMLAGGPGITPIYQVIQSILSDPEDETEMFVVYANRTEDDILVREELEGWANKHKDRLKVWYVVEIAKEGWNYSTGFITEPVLREHVPEGLEGESLALACGPPPMIQFALQPNLEKMGYNVKEDLLIF.

The interval 53–72 (NDAVDDSYDSSDDEDESHNR) is disordered. Residues 56–68 (VDDSYDSSDDEDE) are compositionally biased toward acidic residues. Cys-191 lines the Mo-molybdopterin pocket. One can recognise a Cytochrome b5 heme-binding domain in the interval 539–614 (AKMYSMSEVR…LEDYRIGELI (76 aa)). Heme contacts are provided by His-574 and His-597. In terms of domain architecture, FAD-binding FR-type spans 654-766 (REKVPVTLIE…KGPLGHIEYL (113 aa)). Residues 706–709 (RAYT), 723–727 (VVKVY), Phe-728, Phe-735, 740–742 (LMS), and Thr-793 each bind FAD.

It belongs to the nitrate reductase family. Homodimer. FAD serves as cofactor. The cofactor is heme. Requires Mo-molybdopterin as cofactor.

It carries out the reaction nitrite + NAD(+) + H2O = nitrate + NADH + H(+). Functionally, nitrate reductase is a key enzyme involved in the first step of nitrate assimilation in plants, fungi and bacteria. This chain is Nitrate reductase [NADH], clone PBNBR1412 (NIA2), found in Brassica napus (Rape).